Here is a 210-residue protein sequence, read N- to C-terminus: Somatotropin-2 (210 aa).

An N-terminal signal peptide occupies residues 1–22 (MGQVFLLMPVLLVSCFLGQGAA). His-38 is a Zn(2+) binding site. A disulfide bridge links Cys-71 with Cys-183. Glu-192 contributes to the Zn(2+) binding site. Cysteines 200 and 208 form a disulfide.

The protein belongs to the somatotropin/prolactin family.

It is found in the secreted. Its function is as follows. Growth hormone plays an important role in growth control and is involved in the regulation of several anabolic processes. Implicated as an osmoregulatory substance important for seawater adaptation. The sequence is that of Somatotropin-2 (gh2) from Oncorhynchus mykiss (Rainbow trout).